Here is a 287-residue protein sequence, read N- to C-terminus: MQVQKSFKDKKTSGTLYLVPTPIGNLQDMTFRAVATLKEVDFICAEDTRNTGLLLKHFDIATKQISFHEHNAYEKIPDLIDLLISGRSLAQVSDAGMPSISDPGHDLVKAAIDSDITVVALPGASAGITALIASGLAPQPHVFYGFLPRKAGQQKAFFEDKHHYPETQMFYESPYRIKDTLTNMLACYGDRQVVLVRELTKLFEEYQRGSISEILSYLEETSLKGECLLIVAGAQVDSEVELTADVDLVSLVQKEIQAGAKPNQAIKTIAKAYQVNRQELYQQFHDL.

This sequence belongs to the methyltransferase superfamily. RsmI family.

Its subcellular location is the cytoplasm. It catalyses the reaction cytidine(1402) in 16S rRNA + S-adenosyl-L-methionine = 2'-O-methylcytidine(1402) in 16S rRNA + S-adenosyl-L-homocysteine + H(+). Functionally, catalyzes the 2'-O-methylation of the ribose of cytidine 1402 (C1402) in 16S rRNA. This chain is Ribosomal RNA small subunit methyltransferase I, found in Streptococcus pyogenes serotype M3 (strain ATCC BAA-595 / MGAS315).